A 137-amino-acid polypeptide reads, in one-letter code: Large ribosomal subunit protein uL16 (137 aa).

Residues 1–17 (MLSPKRTKFRKQQRGRM) show a composition bias toward basic residues. The interval 1–24 (MLSPKRTKFRKQQRGRMRGNANSG) is disordered.

This sequence belongs to the universal ribosomal protein uL16 family. Part of the 50S ribosomal subunit.

Its function is as follows. Binds 23S rRNA and is also seen to make contacts with the A and possibly P site tRNAs. The polypeptide is Large ribosomal subunit protein uL16 (Trichodesmium erythraeum (strain IMS101)).